The sequence spans 371 residues: Dual-specificity RNA methyltransferase RlmN (371 aa).

The active-site Proton acceptor is Glu-97. A Radical SAM core domain is found at 103–341 (DGDRATLCVS…VTVRTTRGDD (239 aa)). An intrachain disulfide couples Cys-110 to Cys-346. [4Fe-4S] cluster contacts are provided by Cys-117, Cys-121, and Cys-124. S-adenosyl-L-methionine contacts are provided by residues 171–172 (GE), Ser-203, 225–227 (SLH), and Asn-303. The active-site S-methylcysteine intermediate is Cys-346.

This sequence belongs to the radical SAM superfamily. RlmN family. It depends on [4Fe-4S] cluster as a cofactor.

Its subcellular location is the cytoplasm. The catalysed reaction is adenosine(2503) in 23S rRNA + 2 reduced [2Fe-2S]-[ferredoxin] + 2 S-adenosyl-L-methionine = 2-methyladenosine(2503) in 23S rRNA + 5'-deoxyadenosine + L-methionine + 2 oxidized [2Fe-2S]-[ferredoxin] + S-adenosyl-L-homocysteine. The enzyme catalyses adenosine(37) in tRNA + 2 reduced [2Fe-2S]-[ferredoxin] + 2 S-adenosyl-L-methionine = 2-methyladenosine(37) in tRNA + 5'-deoxyadenosine + L-methionine + 2 oxidized [2Fe-2S]-[ferredoxin] + S-adenosyl-L-homocysteine. Functionally, specifically methylates position 2 of adenine 2503 in 23S rRNA and position 2 of adenine 37 in tRNAs. m2A2503 modification seems to play a crucial role in the proofreading step occurring at the peptidyl transferase center and thus would serve to optimize ribosomal fidelity. This Marinomonas sp. (strain MWYL1) protein is Dual-specificity RNA methyltransferase RlmN.